The chain runs to 501 residues: Glycerol kinase (501 aa).

Residue Thr-17 participates in ADP binding. Positions 17, 18, and 19 each coordinate ATP. Thr-17 contacts sn-glycerol 3-phosphate. Arg-21 is an ADP binding site. Sn-glycerol 3-phosphate contacts are provided by Arg-87, Glu-88, Tyr-139, and Asp-243. Arg-87, Glu-88, Tyr-139, Asp-243, and Gln-244 together coordinate glycerol. Residues Thr-265 and Gly-308 each contribute to the ADP site. Residues Thr-265, Gly-308, Gln-312, and Gly-409 each coordinate ATP. ADP contacts are provided by Gly-409 and Asn-413.

This sequence belongs to the FGGY kinase family.

The catalysed reaction is glycerol + ATP = sn-glycerol 3-phosphate + ADP + H(+). Its pathway is polyol metabolism; glycerol degradation via glycerol kinase pathway; sn-glycerol 3-phosphate from glycerol: step 1/1. With respect to regulation, inhibited by fructose 1,6-bisphosphate (FBP). Key enzyme in the regulation of glycerol uptake and metabolism. Catalyzes the phosphorylation of glycerol to yield sn-glycerol 3-phosphate. This Pseudomonas fluorescens (strain SBW25) protein is Glycerol kinase.